The primary structure comprises 99 residues: Small integral membrane protein 14 (99 aa).

Over 1 to 49 the chain is Lumenal; the sequence is MAEGGFDPCECVCSHEHAMRRLINLLRQSQSYCTDTECLRELPGPSSDS. The helical transmembrane segment at 50–70 threads the bilayer; it reads GISITVILMAWMVIAMLLFLL. The Cytoplasmic segment spans residues 71–99; it reads RPPNLRGSSLPGKPSSPHSGQDPPAPPVD. The interval 77 to 99 is disordered; that stretch reads GSSLPGKPSSPHSGQDPPAPPVD.

In terms of tissue distribution, ubiquitously expressed.

Its subcellular location is the endoplasmic reticulum membrane. This is Small integral membrane protein 14 (Smim14) from Mus musculus (Mouse).